The following is a 353-amino-acid chain: tRNA-specific 2-thiouridylase MnmA 2 (353 aa).

Position 6–13 (6–13) interacts with ATP; it reads LLSGGVDS. Positions 92–94 are interaction with target base in tRNA; sequence NPD. Cys-97 acts as the Nucleophile in catalysis. The cysteines at positions 97 and 192 are disulfide-linked. Gly-120 lines the ATP pocket. Residues 142–144 form an interaction with tRNA region; that stretch reads KDQ. The Cysteine persulfide intermediate role is filled by Cys-192.

The protein belongs to the MnmA/TRMU family.

Its subcellular location is the cytoplasm. It carries out the reaction S-sulfanyl-L-cysteinyl-[protein] + uridine(34) in tRNA + AH2 + ATP = 2-thiouridine(34) in tRNA + L-cysteinyl-[protein] + A + AMP + diphosphate + H(+). Its function is as follows. Catalyzes the 2-thiolation of uridine at the wobble position (U34) of tRNA, leading to the formation of s(2)U34. This Bacteroides fragilis (strain YCH46) protein is tRNA-specific 2-thiouridylase MnmA 2.